The following is a 143-amino-acid chain: Large ribosomal subunit protein uL11 (143 aa).

Belongs to the universal ribosomal protein uL11 family. Part of the ribosomal stalk of the 50S ribosomal subunit. Interacts with L10 and the large rRNA to form the base of the stalk. L10 forms an elongated spine to which L12 dimers bind in a sequential fashion forming a multimeric L10(L12)X complex. One or more lysine residues are methylated.

In terms of biological role, forms part of the ribosomal stalk which helps the ribosome interact with GTP-bound translation factors. The sequence is that of Large ribosomal subunit protein uL11 from Dechloromonas aromatica (strain RCB).